Consider the following 346-residue polypeptide: Phosphate acyltransferase (346 aa).

Belongs to the PlsX family. Homodimer. Probably interacts with PlsY.

The protein resides in the cytoplasm. It catalyses the reaction a fatty acyl-[ACP] + phosphate = an acyl phosphate + holo-[ACP]. Its pathway is lipid metabolism; phospholipid metabolism. Its function is as follows. Catalyzes the reversible formation of acyl-phosphate (acyl-PO(4)) from acyl-[acyl-carrier-protein] (acyl-ACP). This enzyme utilizes acyl-ACP as fatty acyl donor, but not acyl-CoA. The polypeptide is Phosphate acyltransferase (Geotalea uraniireducens (strain Rf4) (Geobacter uraniireducens)).